The sequence spans 170 residues: Cyclic pyranopterin monophosphate synthase (170 aa).

Residues leucine 75 to histidine 77 and methionine 113 to glutamate 114 contribute to the substrate site. The active site involves aspartate 128.

This sequence belongs to the MoaC family. Homohexamer; trimer of dimers.

The catalysed reaction is (8S)-3',8-cyclo-7,8-dihydroguanosine 5'-triphosphate = cyclic pyranopterin phosphate + diphosphate. It functions in the pathway cofactor biosynthesis; molybdopterin biosynthesis. Functionally, catalyzes the conversion of (8S)-3',8-cyclo-7,8-dihydroguanosine 5'-triphosphate to cyclic pyranopterin monophosphate (cPMP). The polypeptide is Cyclic pyranopterin monophosphate synthase (Pelotomaculum thermopropionicum (strain DSM 13744 / JCM 10971 / SI)).